Reading from the N-terminus, the 472-residue chain is 7-dimethylallyltryptophan synthase hasE (472 aa).

Glu-138 is an L-tryptophan binding site. Dimethylallyl diphosphate is bound by residues Arg-154, Lys-239, Tyr-241, Lys-313, Tyr-315, Tyr-393, Tyr-460, and Tyr-464.

This sequence belongs to the tryptophan dimethylallyltransferase family. Homodimer.

It carries out the reaction L-tryptophan + dimethylallyl diphosphate = 7-(3-methylbut-2-enyl)-L-tryptophan + diphosphate. It catalyses the reaction an N-terminal L-tryptophanyl-L-alpha-aminoacyl-[peptide] + H2O = an N-terminal L-alpha-aminoacyl-[peptide] + L-tryptophan. Its pathway is secondary metabolite biosynthesis. Functionally, 7-dimethylallyltryptophan synthase; part of the gene cluster that mediates the biosynthesis of hexadehydro-astechrome (HAS), a tryptophan-derived iron(III)-complex that acts as a virulence factor in infected mice. Catalyzes the prenylation of L-tryptophan at the C-7 position of the indole moiety. The enzyme is specific for dimethylallyl diphosphate (DMAPP) as prenyl donor. Also accepts D-tryptophan, typtophan-derivatives with modifications at the side chain or the indole ring, and linear and cyclic dipeptides such as H-L-Trp-L-Gly-OH or cyclo-L-Trp-L-Gly as substrates, however with lower efficiency. Also has tryptophan aminopeptidase activity towards linear peptides with a tryptophanyl moiety at the N-terminus. Dipeptides are better substrates than peptides with 3 or more amino acids. Enzymatic rate constants however are much higher for the prenyltransferase activity than for the aminopeptidase activity. Within the hexadehydro-astechrome biosyntetic pathway, hasE catalyzes the prenylation of the hasD-tethered tryptophan or the resulting tethered Trp-Ala dipeptid. The HAS biosynthesis begins with the synthesis of a tethered Trp-Ala dipeptide by the NRPS hasD. The 7-dimethylallyltryptophan synthase hasE then catalyzes the prenylation of the hasD-tethered tryptophan or the resulting tethered Trp-Ala dipeptide at the C-7 position of the indole moiety. HAS biosynthesis continues via tethered intermediates with the succesive actions of the cytochrome P450 monooxygenase hasH, the O-methyltransferase hasC, and the FAD-linked oxidoreductase hasG. The resulting O-methylated diketopiperazine is then released from hasD. Finally, three O-methylated diketopiperazine molecules assemble in a trimeric complex with Fe(III) to produce hexadehydro-astechrome. The polypeptide is 7-dimethylallyltryptophan synthase hasE (Aspergillus fumigatus (strain CBS 144.89 / FGSC A1163 / CEA10) (Neosartorya fumigata)).